The primary structure comprises 287 residues: Rhomboid-like protein 18 (287 aa).

6 helical membrane-spanning segments follow: residues 10–30, 53–73, 90–110, 117–137, 145–165, and 172–192; these read NAPV…FFGI, LIIS…LYLL, VFIF…LSLT, LLTS…FLDI, VLGV…QLLL, and IFTG…IFGI. The region spanning 244 to 284 is the UBA domain; it reads EPSEEAIATLVSMGFDQNAARQALVHARNDVNAATNILLEA.

It belongs to the peptidase S54 family.

The protein resides in the membrane. Functionally, probable rhomboid-type serine protease that catalyzes intramembrane proteolysis. This Arabidopsis thaliana (Mouse-ear cress) protein is Rhomboid-like protein 18.